Consider the following 322-residue polypeptide: MARDKIALIGSGQIGGTLAHMIGLKELGDVVLFDIAEGVPQGKALDIAESSPVDGFDANFTGANSYEAIEGASVVIVTAGVPRKPGMSRDDLLSINLKVMEQVGAGIKKYAPDAFVICITNPLDAMVWALQKASGMPAKKVVGMAGVLDSARFRYFLADEFNVSVEDVTAFVLGGHGDTMVPLVKYSTVAGIPLPDLVKMGWTSQARLDEIVDRTRNGGAEIVNLLKTGSAFYAPAASAIAMAESYLRDKKRVLPVAAYLNGEYGVKDMYVGVPVVIGAKGVERIVEIEMAGKDREAFDKSVGAVQGLVDACKKIAPDLLGR.

NAD(+) contacts are provided by residues 10-15 and Asp34; that span reads GSGQIG. Substrate-binding residues include Arg83 and Arg89. NAD(+)-binding positions include Asn96 and 119–121; that span reads ITN. Positions 121 and 152 each coordinate substrate. The active-site Proton acceptor is the His176.

The protein belongs to the LDH/MDH superfamily. MDH type 3 family.

The catalysed reaction is (S)-malate + NAD(+) = oxaloacetate + NADH + H(+). In terms of biological role, catalyzes the reversible oxidation of malate to oxaloacetate. This Rhodopseudomonas palustris (strain HaA2) protein is Malate dehydrogenase.